The primary structure comprises 413 residues: MKLSISKVANGARLGVISNIGRNGDKTLEVPGCLLYTKTGSPPHLTHDTLQTIEGVPAVTHITLSTLAEHQEVLEEYKEGIGKFAGMPDAVLYCSTHDPVSPCPTGYNTNKAVSLWGAGGRIEMTAQKFISAQRVLRPDWFQCLSDGEVTPGGNSRKRVKKSVDRTLAFLDECLQLLSGHEDLKPCVLIGAVEGGDLLEERLRSARETAKRPVGGFLLDGFHGGSAEKELSLISAVTAALPEDKPRFIHGMGRPDEVLECVQRGVDLFDSCFPYRVTERGCALIFSHCYRPDPETAVLEKSETSGAERNGDVGAESEEPDADRAEMTSFEICLKEKRFREDFRPLLEGCSCYCCRNHSRAYVHHLLAAKELLAGILLMIHNFQHYFRFFGSIRAALRDGEINALAELIRKQSS.

The segment at 298-321 (LEKSETSGAERNGDVGAESEEPDA) is disordered. Cys349, Cys351, Cys354, and His380 together coordinate Zn(2+).

Belongs to the queuine tRNA-ribosyltransferase family. QTRT2 subfamily. Heterodimer of a catalytic subunit qtrt1 and an accessory subunit qtrt2. Zn(2+) serves as cofactor.

It is found in the cytoplasm. The protein resides in the mitochondrion outer membrane. Functionally, non-catalytic subunit of the queuine tRNA-ribosyltransferase (TGT) that catalyzes the base-exchange of a guanine (G) residue with queuine (Q) at position 34 (anticodon wobble position) in tRNAs with GU(N) anticodons (tRNA-Asp, -Asn, -His and -Tyr), resulting in the hypermodified nucleoside queuosine (7-(((4,5-cis-dihydroxy-2-cyclopenten-1-yl)amino)methyl)-7-deazaguanosine). The polypeptide is Queuine tRNA-ribosyltransferase accessory subunit 2 (Xenopus tropicalis (Western clawed frog)).